The following is a 285-amino-acid chain: Bifunctional protein FolD (285 aa).

Residues 165–167 (GRS), serine 190, and isoleucine 231 contribute to the NADP(+) site.

It belongs to the tetrahydrofolate dehydrogenase/cyclohydrolase family. Homodimer.

It carries out the reaction (6R)-5,10-methylene-5,6,7,8-tetrahydrofolate + NADP(+) = (6R)-5,10-methenyltetrahydrofolate + NADPH. It catalyses the reaction (6R)-5,10-methenyltetrahydrofolate + H2O = (6R)-10-formyltetrahydrofolate + H(+). The protein operates within one-carbon metabolism; tetrahydrofolate interconversion. Catalyzes the oxidation of 5,10-methylenetetrahydrofolate to 5,10-methenyltetrahydrofolate and then the hydrolysis of 5,10-methenyltetrahydrofolate to 10-formyltetrahydrofolate. This is Bifunctional protein FolD from Verminephrobacter eiseniae (strain EF01-2).